We begin with the raw amino-acid sequence, 96 residues long: Pterin-4-alpha-carbinolamine dehydratase (96 aa).

It belongs to the pterin-4-alpha-carbinolamine dehydratase family.

Its subcellular location is the spore wall. It carries out the reaction (4aS,6R)-4a-hydroxy-L-erythro-5,6,7,8-tetrahydrobiopterin = (6R)-L-erythro-6,7-dihydrobiopterin + H2O. Its function is as follows. Has a role in spore wall formation. This Schizosaccharomyces pombe (strain 972 / ATCC 24843) (Fission yeast) protein is Pterin-4-alpha-carbinolamine dehydratase (omt2).